Consider the following 191-residue polypeptide: NADH-quinone oxidoreductase subunit B (191 aa).

4 residues coordinate [4Fe-4S] cluster: cysteine 52, cysteine 53, cysteine 118, and cysteine 148.

This sequence belongs to the complex I 20 kDa subunit family. In terms of assembly, NDH-1 is composed of 14 different subunits. Subunits NuoB, C, D, E, F, and G constitute the peripheral sector of the complex. [4Fe-4S] cluster is required as a cofactor.

It localises to the cell inner membrane. The catalysed reaction is a quinone + NADH + 5 H(+)(in) = a quinol + NAD(+) + 4 H(+)(out). Functionally, NDH-1 shuttles electrons from NADH, via FMN and iron-sulfur (Fe-S) centers, to quinones in the respiratory chain. The immediate electron acceptor for the enzyme in this species is believed to be a menaquinone. Couples the redox reaction to proton translocation (for every two electrons transferred, four hydrogen ions are translocated across the cytoplasmic membrane), and thus conserves the redox energy in a proton gradient. The chain is NADH-quinone oxidoreductase subunit B from Azobacteroides pseudotrichonymphae genomovar. CFP2.